The chain runs to 213 residues: 3-isopropylmalate dehydratase small subunit (213 aa).

Belongs to the LeuD family. LeuD type 1 subfamily. As to quaternary structure, heterodimer of LeuC and LeuD.

It catalyses the reaction (2R,3S)-3-isopropylmalate = (2S)-2-isopropylmalate. It functions in the pathway amino-acid biosynthesis; L-leucine biosynthesis; L-leucine from 3-methyl-2-oxobutanoate: step 2/4. In terms of biological role, catalyzes the isomerization between 2-isopropylmalate and 3-isopropylmalate, via the formation of 2-isopropylmaleate. The polypeptide is 3-isopropylmalate dehydratase small subunit (Neisseria meningitidis serogroup C / serotype 2a (strain ATCC 700532 / DSM 15464 / FAM18)).